The chain runs to 464 residues: Fumarate hydratase class II (464 aa).

Substrate contacts are provided by residues 98-100 (SGT), 129-132 (HPND), 139-141 (SSN), and Thr187. The active-site Proton donor/acceptor is His188. Ser318 is an active-site residue. Residues Ser319 and 324–326 (KVN) contribute to the substrate site.

It belongs to the class-II fumarase/aspartase family. Fumarase subfamily. As to quaternary structure, homotetramer.

It localises to the cytoplasm. It catalyses the reaction (S)-malate = fumarate + H2O. It participates in carbohydrate metabolism; tricarboxylic acid cycle; (S)-malate from fumarate: step 1/1. In terms of biological role, involved in the TCA cycle. Catalyzes the stereospecific interconversion of fumarate to L-malate. The chain is Fumarate hydratase class II from Haemophilus ducreyi (strain 35000HP / ATCC 700724).